The primary structure comprises 310 residues: Ribose-phosphate pyrophosphokinase (310 aa).

ATP-binding positions include 34-36 (DQE) and 93-94 (RQ). Mg(2+) contacts are provided by His127 and Asp167. Lys190 is a catalytic residue. D-ribose 5-phosphate-binding positions include Arg192, Asp216, and 220–224 (DSGGT).

This sequence belongs to the ribose-phosphate pyrophosphokinase family. Class I subfamily. As to quaternary structure, homohexamer. The cofactor is Mg(2+).

The protein resides in the cytoplasm. The catalysed reaction is D-ribose 5-phosphate + ATP = 5-phospho-alpha-D-ribose 1-diphosphate + AMP + H(+). The protein operates within metabolic intermediate biosynthesis; 5-phospho-alpha-D-ribose 1-diphosphate biosynthesis; 5-phospho-alpha-D-ribose 1-diphosphate from D-ribose 5-phosphate (route I): step 1/1. Involved in the biosynthesis of the central metabolite phospho-alpha-D-ribosyl-1-pyrophosphate (PRPP) via the transfer of pyrophosphoryl group from ATP to 1-hydroxyl of ribose-5-phosphate (Rib-5-P). This is Ribose-phosphate pyrophosphokinase from Rhizobium meliloti (strain 1021) (Ensifer meliloti).